Consider the following 175-residue polypeptide: Bifunctional protein PyrR (175 aa).

Residues 98–110 (VIIIDDVLYTGRT) carry the PRPP-binding motif.

The protein belongs to the purine/pyrimidine phosphoribosyltransferase family. PyrR subfamily. In terms of assembly, homodimer and homohexamer; in equilibrium.

The catalysed reaction is UMP + diphosphate = 5-phospho-alpha-D-ribose 1-diphosphate + uracil. In terms of biological role, regulates transcriptional attenuation of the pyrimidine nucleotide (pyr) operon by binding in a uridine-dependent manner to specific sites on pyr mRNA. This disrupts an antiterminator hairpin in the RNA and favors formation of a downstream transcription terminator, leading to a reduced expression of downstream genes. Also displays a weak uracil phosphoribosyltransferase activity which is not physiologically significant. In Staphylococcus aureus (strain bovine RF122 / ET3-1), this protein is Bifunctional protein PyrR.